Consider the following 143-residue polypeptide: Large ribosomal subunit protein uL16 (143 aa).

This sequence belongs to the universal ribosomal protein uL16 family. Part of the 50S ribosomal subunit.

Binds 23S rRNA and is also seen to make contacts with the A and possibly P site tRNAs. In Fusobacterium nucleatum subsp. nucleatum (strain ATCC 25586 / DSM 15643 / BCRC 10681 / CIP 101130 / JCM 8532 / KCTC 2640 / LMG 13131 / VPI 4355), this protein is Large ribosomal subunit protein uL16.